Consider the following 250-residue polypeptide: 5'-nucleotidase SurE (250 aa).

A divalent metal cation contacts are provided by Asp8, Asp9, Ser39, and Asn91.

Belongs to the SurE nucleotidase family. A divalent metal cation serves as cofactor.

It localises to the cytoplasm. The catalysed reaction is a ribonucleoside 5'-phosphate + H2O = a ribonucleoside + phosphate. Nucleotidase that shows phosphatase activity on nucleoside 5'-monophosphates. This Leptospira interrogans serogroup Icterohaemorrhagiae serovar copenhageni (strain Fiocruz L1-130) protein is 5'-nucleotidase SurE.